The following is a 297-amino-acid chain: HTH-type transcriptional regulator ArgP (297 aa).

Positions 2-58 (FDYKLLSALAAVVEQAGFERAAQVLGLSQSAISQRIKLLEARVGQPVLVRGTPPSPT) constitute an HTH lysR-type domain. The H-T-H motif DNA-binding region spans 19 to 38 (FERAAQVLGLSQSAISQRIK).

Belongs to the LysR transcriptional regulatory family. In terms of assembly, homodimer.

Its function is as follows. Controls the transcription of genes involved in arginine and lysine metabolism. In Pseudomonas fluorescens (strain Pf0-1), this protein is HTH-type transcriptional regulator ArgP.